The following is a 256-amino-acid chain: MPLHKVPVGLWKRLRLREGIYSRLPAHYLRSLEEARTPTPVHFRPHGAKFKINPKNGQRERVEDVPIPVHYPPESQLGLWGGEGWLKGHRYVNNDKFSKRVKKVWKPQLFQRELYSEILDTRFTVTVTMRTLDLIDEAYGFDFYILKTPKEDLCSKFGMDLKRGMLLRLARQDPQLHPDDPERRAAIYDKYKAFVIPEAEAEWVGLTLDEAVEKQRLLEEKDPVPLFKVYVEELVEQLQQQALSEPAVVQKRANRT.

A mitochondrion-targeting transit peptide spans 1-55 (MPLHKVPVGLWKRLRLREGIYSRLPAHYLRSLEEARTPTPVHFRPHGAKFKINPK).

Belongs to the bacterial ribosomal protein bL28 family. Component of the mitochondrial ribosome large subunit (39S) which comprises a 16S rRNA and about 50 distinct proteins. Interacts with OXA1L.

It localises to the mitochondrion. This chain is Large ribosomal subunit protein bL28m (MRPL28), found in Bos taurus (Bovine).